We begin with the raw amino-acid sequence, 261 residues long: 8-demethyl-8-(2,3-dimethoxy-alpha-L-rhamnosyl)-tetracenomycin-C 4'-O-methyltransferase (261 aa).

Residues 53–54 (TM), 81–85 (ETGVW), 111–115 (DSFEG), Phe167, 185–186 (DG), and Ser191 each bind S-adenosyl-L-methionine. Mg(2+) is bound at residue Asp185. Residues Asp212 and Asp213 each coordinate Mg(2+).

Belongs to the methyltransferase TylF/MycF family. Mg(2+) serves as cofactor.

It carries out the reaction 8-demethyl-8-(2,3-di-O-methyl-alpha-L-rhamnosyl)-tetracenomycin C + S-adenosyl-L-methionine = 8-demethyl-8-(2,3,4-tri-O-methyl-alpha-L-rhamnosyl)-tetracenomycin C + S-adenosyl-L-homocysteine + H(+). It participates in antibiotic biosynthesis. O-methyltransferase involved in the biosynthesis of the permethylated L-rhamnose moiety of elloramycin, an antitumor polyketide. Mediates the methylation of the hydroxy groups at the 4'-position after the sugar moiety has been attached to the aglycon. The polypeptide is 8-demethyl-8-(2,3-dimethoxy-alpha-L-rhamnosyl)-tetracenomycin-C 4'-O-methyltransferase (Streptomyces olivaceus).